The chain runs to 544 residues: Membrane protein insertase YidC (544 aa).

A run of 5 helical transmembrane segments spans residues 15-35, 321-341, 343-363, 409-429, and 506-526; these read LFLIGLFMLINDIFSSIMLSF, LWYLIQVPMQMVMQVFYDVIP, WGLSIIFLTIVVRILIFPLTF, LGGCFPVILQLPIFFALYSLV, and MPIMFFFILYNMPSGLLIYWI.

Belongs to the OXA1/ALB3/YidC family. Type 1 subfamily. In terms of assembly, interacts with the Sec translocase complex via SecD. Specifically interacts with transmembrane segments of nascent integral membrane proteins during membrane integration.

It is found in the cell inner membrane. Functionally, required for the insertion and/or proper folding and/or complex formation of integral membrane proteins into the membrane. Involved in integration of membrane proteins that insert both dependently and independently of the Sec translocase complex, as well as at least some lipoproteins. Aids folding of multispanning membrane proteins. The polypeptide is Membrane protein insertase YidC (Borrelia garinii subsp. bavariensis (strain ATCC BAA-2496 / DSM 23469 / PBi) (Borreliella bavariensis)).